Reading from the N-terminus, the 167-residue chain is Putative pre-16S rRNA nuclease (167 aa).

The tract at residues methionine 1–arginine 24 is disordered. Basic and acidic residues predominate over residues arginine 7–arginine 21.

The protein belongs to the YqgF nuclease family.

Its subcellular location is the cytoplasm. Its function is as follows. Could be a nuclease involved in processing of the 5'-end of pre-16S rRNA. The polypeptide is Putative pre-16S rRNA nuclease (Mycolicibacterium paratuberculosis (strain ATCC BAA-968 / K-10) (Mycobacterium paratuberculosis)).